The primary structure comprises 434 residues: Sulfide-quinone reductase (434 aa).

FAD is bound by residues 8 to 12 (GAGTG), 34 to 35 (SA), and 77 to 78 (SA). Catalysis depends on cysteine 160, which acts as the Cysteine persulfide intermediate. Isoleucine 302 and glycine 322 together coordinate FAD. Cysteine 356 serves as the catalytic Cysteine persulfide intermediate. Residue lysine 391 participates in FAD binding.

The protein belongs to the SQRD family. In terms of assembly, homodimer. It depends on FAD as a cofactor.

It localises to the membrane. It carries out the reaction n a quinone + n hydrogen sulfide + n H(+) = polysulfur(n-2) + n a quinol. Catalyzes the oxidation of hydrogen sulfide, with the help of a quinone. Consecutive reaction cycles lead to the accumulation of a polysulfide product on the active site Cys residues; these products are released when they exceed a critical length, typically as cyclooctasulfur. The polypeptide is Sulfide-quinone reductase (Acidithiobacillus ferrooxidans (strain ATCC 23270 / DSM 14882 / CIP 104768 / NCIMB 8455) (Ferrobacillus ferrooxidans (strain ATCC 23270))).